Consider the following 423-residue polypeptide: Adenylosuccinate synthetase (423 aa).

GTP contacts are provided by residues 12 to 18 (GDEGKGK) and 40 to 42 (GHT). Asp-13 (proton acceptor) is an active-site residue. Mg(2+) is bound by residues Asp-13 and Gly-40. IMP contacts are provided by residues 13-16 (DEGK), 38-41 (NAGH), Thr-129, Arg-143, Gln-221, Thr-236, and Arg-300. His-41 (proton donor) is an active-site residue. Residue 296 to 302 (AVTGRKR) coordinates substrate. Residues Arg-302, 328–330 (KSD), and 408–410 (SVG) each bind GTP.

It belongs to the adenylosuccinate synthetase family. Homodimer. Mg(2+) is required as a cofactor.

The protein resides in the cytoplasm. It carries out the reaction IMP + L-aspartate + GTP = N(6)-(1,2-dicarboxyethyl)-AMP + GDP + phosphate + 2 H(+). Its pathway is purine metabolism; AMP biosynthesis via de novo pathway; AMP from IMP: step 1/2. Its function is as follows. Plays an important role in the de novo pathway of purine nucleotide biosynthesis. Catalyzes the first committed step in the biosynthesis of AMP from IMP. In Parabacteroides distasonis (strain ATCC 8503 / DSM 20701 / CIP 104284 / JCM 5825 / NCTC 11152), this protein is Adenylosuccinate synthetase.